The sequence spans 947 residues: Protein NETWORKED 2D (947 aa).

One can recognise an NAB domain in the interval 10 to 90 (YSWWWASHIR…ERYDHISTEL (81 aa)). Coiled-coil stretches lie at residues 176 to 205 (KPEA…SSYE), 247 to 342 (MTET…HFES), and 375 to 433 (TALI…VLDK). Disordered regions lie at residues 455–555 (NLHE…DKTD) and 580–620 (EKQG…GEPD). Positions 474 to 514 (PQKDLEGEKRTLDISEEIKEHQKETGEEKKEAPVKSVKFEQ) are enriched in basic and acidic residues. Residues 525 to 536 (TIPSTNPDTVLE) show a composition bias toward polar residues. 3 stretches are compositionally biased toward basic and acidic residues: residues 537–555 (STEK…DKTD), 580–589 (EKQGESDKID), and 610–620 (EDQKEKEGEPD). Coiled coils occupy residues 645–684 (RNFK…LLQK) and 744–773 (GQIQ…DGSS).

It belongs to the NET family.

In terms of biological role, plant-specific actin binding protein. May be part of a membrane-cytoskeletal adapter complex. This Arabidopsis thaliana (Mouse-ear cress) protein is Protein NETWORKED 2D.